The chain runs to 118 residues: Large ribosomal subunit protein bL20 (118 aa).

Belongs to the bacterial ribosomal protein bL20 family.

Functionally, binds directly to 23S ribosomal RNA and is necessary for the in vitro assembly process of the 50S ribosomal subunit. It is not involved in the protein synthesizing functions of that subunit. The chain is Large ribosomal subunit protein bL20 from Pseudomonas entomophila (strain L48).